The chain runs to 101 residues: NADH-quinone oxidoreductase subunit K (101 aa).

3 helical membrane-spanning segments follow: residues 5 to 25, 30 to 50, and 62 to 82; these read PNWY…GVLF, IVVL…LVTF, and LVFF…AIVI.

This sequence belongs to the complex I subunit 4L family. NDH-1 is composed of 14 different subunits. Subunits NuoA, H, J, K, L, M, N constitute the membrane sector of the complex.

Its subcellular location is the cell inner membrane. It catalyses the reaction a quinone + NADH + 5 H(+)(in) = a quinol + NAD(+) + 4 H(+)(out). Its function is as follows. NDH-1 shuttles electrons from NADH, via FMN and iron-sulfur (Fe-S) centers, to quinones in the respiratory chain. The immediate electron acceptor for the enzyme in this species is believed to be a menaquinone. Couples the redox reaction to proton translocation (for every two electrons transferred, four hydrogen ions are translocated across the cytoplasmic membrane), and thus conserves the redox energy in a proton gradient. In Salinibacter ruber (strain DSM 13855 / M31), this protein is NADH-quinone oxidoreductase subunit K.